Here is a 485-residue protein sequence, read N- to C-terminus: Adenosylhomocysteinase (485 aa).

Residues Thr60, Asp146, and Glu208 each coordinate substrate. An NAD(+)-binding site is contributed by 209–211 (TTT). Residues Lys238 and Asp242 each contribute to the substrate site. Residues Asn243, 272 to 277 (GYGDVG), Glu295, Asn330, 351 to 353 (IGH), and Asn399 each bind NAD(+).

Belongs to the adenosylhomocysteinase family. NAD(+) serves as cofactor.

The protein localises to the cytoplasm. The catalysed reaction is S-adenosyl-L-homocysteine + H2O = L-homocysteine + adenosine. It participates in amino-acid biosynthesis; L-homocysteine biosynthesis; L-homocysteine from S-adenosyl-L-homocysteine: step 1/1. May play a key role in the regulation of the intracellular concentration of adenosylhomocysteine. In Streptomyces coelicolor (strain ATCC BAA-471 / A3(2) / M145), this protein is Adenosylhomocysteinase.